Reading from the N-terminus, the 347-residue chain is Leucine-rich repeat-containing protein 69 (347 aa).

LRR repeat units lie at residues 15 to 37 (NTKI…EKLP), 38 to 60 (NLKT…RTLT), 61 to 82 (QLTL…IKYL), 84 to 105 (SLKN…VFNG), 108 to 129 (RLIM…IGRL), 131 to 152 (SLTY…LCSL), 154 to 175 (HLSE…IKFL), 177 to 198 (NLQQ…ICHL), and 200 to 222 (KLRV…QNLR).

It belongs to the LRRC69 family.

This Mus musculus (Mouse) protein is Leucine-rich repeat-containing protein 69 (Lrrc69).